The following is a 325-amino-acid chain: Thiamine-monophosphate kinase (325 aa).

Mg(2+) is bound by residues aspartate 30, serine 45, threonine 46, and aspartate 47. Residue histidine 54 participates in substrate binding. The Mg(2+) site is built by aspartate 75 and aspartate 122. Residues 121–122 and arginine 146 each bind ATP; that span reads GD. Residue aspartate 212 coordinates Mg(2+). Serine 214 contributes to the ATP binding site. Mg(2+) is bound at residue aspartate 215. Substrate is bound by residues glutamate 263 and tyrosine 319.

It belongs to the thiamine-monophosphate kinase family.

The catalysed reaction is thiamine phosphate + ATP = thiamine diphosphate + ADP. It functions in the pathway cofactor biosynthesis; thiamine diphosphate biosynthesis; thiamine diphosphate from thiamine phosphate: step 1/1. Its activity is regulated as follows. Is markedly activated by the monovalent cations K(+), NH(4)(+), and Rb(+). Is significantly inhibited by ADP, AMP, p-chloromercuribenzoate, N-ethylmaleimide, pyrophosphate, and EDTA. Catalyzes the ATP-dependent phosphorylation of thiamine-monophosphate (TMP) to form thiamine-pyrophosphate (TPP), the active form of vitamin B1. Cannot use thiamine as substrate. Is highly specific for ATP as phosphate donor. The chain is Thiamine-monophosphate kinase (thiL) from Escherichia coli (strain K12).